Reading from the N-terminus, the 478-residue chain is Cysteine--tRNA ligase (478 aa).

C29 is a binding site for Zn(2+). A 'HIGH' region motif is present at residues 31–41 (ATVQSIPHIGH). Positions 207, 232, and 236 each coordinate Zn(2+). The 'KMSKS' region signature appears at 263-267 (KMSKS). K266 serves as a coordination point for ATP.

Belongs to the class-I aminoacyl-tRNA synthetase family. As to quaternary structure, monomer. Zn(2+) is required as a cofactor.

It localises to the cytoplasm. The enzyme catalyses tRNA(Cys) + L-cysteine + ATP = L-cysteinyl-tRNA(Cys) + AMP + diphosphate. The polypeptide is Cysteine--tRNA ligase (Corynebacterium jeikeium (strain K411)).